Here is a 181-residue protein sequence, read N- to C-terminus: ATP synthase subunit b, chloroplastic (181 aa).

A helical transmembrane segment spans residues 31 to 50; that stretch reads NVLNIAILLSGVVYLGRNFL.

It belongs to the ATPase B chain family. In terms of assembly, F-type ATPases have 2 components, F(1) - the catalytic core - and F(0) - the membrane proton channel. F(1) has five subunits: alpha(3), beta(3), gamma(1), delta(1), epsilon(1). F(0) has four main subunits: a(1), b(1), b'(1) and c(10-14). The alpha and beta chains form an alternating ring which encloses part of the gamma chain. F(1) is attached to F(0) by a central stalk formed by the gamma and epsilon chains, while a peripheral stalk is formed by the delta, b and b' chains.

The protein resides in the plastid. It localises to the chloroplast thylakoid membrane. Its function is as follows. F(1)F(0) ATP synthase produces ATP from ADP in the presence of a proton or sodium gradient. F-type ATPases consist of two structural domains, F(1) containing the extramembraneous catalytic core and F(0) containing the membrane proton channel, linked together by a central stalk and a peripheral stalk. During catalysis, ATP synthesis in the catalytic domain of F(1) is coupled via a rotary mechanism of the central stalk subunits to proton translocation. Functionally, component of the F(0) channel, it forms part of the peripheral stalk, linking F(1) to F(0). The protein is ATP synthase subunit b, chloroplastic of Rhodomonas salina (Cryptomonas salina).